A 128-amino-acid polypeptide reads, in one-letter code: NHP2-like protein 1 (128 aa).

Residues 36-48 (RKGANEATKTLNR) are interaction with U4 snRNA and U4atac snRNA. The segment at 96 to 128 (SRPVIACSVTIKEGSQLKPQIQSVQQAIERLLV) is important for U4 snRNA-binding.

The protein belongs to the eukaryotic ribosomal protein eL8 family. Identified in the spliceosome B complex. Component of the U4/U6-U5 tri-snRNP complex. Part of the small subunit (SSU) processome, composed of more than 70 proteins and the RNA chaperone small nucleolar RNA (snoRNA) U3.

It localises to the nucleus. Its subcellular location is the nucleolus. Part of the small subunit (SSU) processome, first precursor of the small eukaryotic ribosomal subunit. During the assembly of the SSU processome in the nucleolus, many ribosome biogenesis factors, an RNA chaperone and ribosomal proteins associate with the nascent pre-rRNA and work in concert to generate RNA folding, modifications, rearrangements and cleavage as well as targeted degradation of pre-ribosomal RNA by the RNA exosome. Involved in pre-mRNA splicing as component of the spliceosome. Binds to the 5'-stem-loop of U4 snRNA and thereby contributes to spliceosome assembly. The protein undergoes a conformational change upon RNA-binding. Core component of box C/D small nucleolar ribonucleoprotein (snoRNP) complexes that function in methylation of multiple sites on ribosomal RNAs (rRNAs) and messenger RNAs (mRNAs). In Xenopus laevis (African clawed frog), this protein is NHP2-like protein 1.